Consider the following 118-residue polypeptide: Aspartate 1-decarboxylase 1 (118 aa).

The active-site Schiff-base intermediate with substrate; via pyruvic acid is the S25. A Pyruvic acid (Ser) modification is found at S25. T57 provides a ligand contact to substrate. Catalysis depends on Y58, which acts as the Proton donor. G73–A75 lines the substrate pocket.

The protein belongs to the PanD family. In terms of assembly, heterooctamer of four alpha and four beta subunits. Pyruvate is required as a cofactor. Post-translationally, is synthesized initially as an inactive proenzyme, which is activated by self-cleavage at a specific serine bond to produce a beta-subunit with a hydroxyl group at its C-terminus and an alpha-subunit with a pyruvoyl group at its N-terminus.

The protein resides in the cytoplasm. It catalyses the reaction L-aspartate + H(+) = beta-alanine + CO2. Its pathway is cofactor biosynthesis; (R)-pantothenate biosynthesis; beta-alanine from L-aspartate: step 1/1. In terms of biological role, catalyzes the pyruvoyl-dependent decarboxylation of aspartate to produce beta-alanine. The polypeptide is Aspartate 1-decarboxylase 1 (Gloeobacter violaceus (strain ATCC 29082 / PCC 7421)).